Reading from the N-terminus, the 106-residue chain is MNAIIFCLLFTTVTATYEVFGKGIEHRNEHLIINQLDIIPVESTPTPNRASRVQKRLCGRRLILFMLATCGECDTDSSEDLSHICCIKQCDVQDIIRVCCPNSFRK.

Positions 1–15 are cleaved as a signal peptide; that stretch reads MNAIIFCLLFTTVTA. Residues 16 to 56 constitute a propeptide that is removed on maturation; the sequence is TYEVFGKGIEHRNEHLIINQLDIIPVESTPTPNRASRVQKR. 4 disulfides stabilise this stretch: Cys-58/Cys-86, Cys-70/Cys-99, Cys-73/Cys-100, and Cys-85/Cys-90.

It belongs to the insulin family.

It is found in the secreted. The sequence is that of Probable insulin-like peptide beta-type 2 (ins-2) from Caenorhabditis elegans.